Consider the following 207-residue polypeptide: MPKLESYKRVHTEELYFPNDQKLWKEQQEALVLLEKFNQTSVTQPEQQMELLKKMFSEIGENCFIQPPFYANFGGKNVHFGTGIYANFNLTLVDDTDIFVGNHVMFGPNVTIDTATHPVSPDLRKRGAQYNKKVYIEENVWLGAGVIVLPGVRIGKNSVIGAGSLVTKDIPDNVVAFGTPCMVKRKINDSDFKTYDHGKKIDLDEFI.

N87 contacts acetyl-CoA. H117 serves as the catalytic Proton donor/acceptor. Acetyl-CoA contacts are provided by residues A144, A162, 167–168 (TK), and R185.

Belongs to the transferase hexapeptide repeat family. In terms of assembly, homotrimer.

The protein localises to the cytoplasm. The enzyme catalyses a beta-D-galactoside + acetyl-CoA = a 6-acetyl-beta-D-galactoside + CoA. The sequence is that of Galactoside O-acetyltransferase (lacA) from Lactococcus lactis subsp. lactis (strain IL1403) (Streptococcus lactis).